The primary structure comprises 800 residues: Signaling protein YkoW (800 aa).

Transmembrane regions (helical) follow at residues 5–27 (VTYN…YISL), 44–66 (WLIG…GMMA), 76–98 (EFMP…LYFV), 103–125 (LTYY…MHYI), 135–157 (IIYE…FVSL), 178–200 (VSSI…AATF), and 215–237 (TFHW…LFSS). Positions 7 to 201 (YNTTLICLSI…YTGMLAATFH (195 aa)) constitute an MHYT domain. Residues 255–319 (QRFQSLIVHN…FEQVKKDKQA (65 aa)) form the PAS domain. Residues 402–536 (YNTVVFFLDL…NKSKYRYYSF (135 aa)) form the GGDEF domain. The EAL domain maps to 545–798 (KLNQEMVLRE…QFEQFIIEQP (254 aa)).

It is found in the cell membrane. In terms of biological role, probable signaling protein whose physiological role is not yet known. In Bacillus subtilis (strain 168), this protein is Signaling protein YkoW (ykoW).